Consider the following 171-residue polypeptide: Signal peptidase complex catalytic subunit SEC11 (171 aa).

Residues 1–6 lie on the Cytoplasmic side of the membrane; it reads MNIRQQ. The helical; Signal-anchor for type II membrane protein transmembrane segment at 7-24 threads the bilayer; the sequence is LVQLLNLAMVLSTAFMFW. The Lumenal segment spans residues 25–171; the sequence is KGLGLVTNSN…MALSTLLTRE (147 aa). Catalysis depends on charge relay system residues Ser44, His83, and Asp113. Positions 157 to 168 are C-terminal short (CTS) helix; it reads GLLGLMALSTLL.

It belongs to the peptidase S26B family. In terms of assembly, component of the signal peptidase complex (SPC) composed of a catalytic subunit SEC11 and three accessory subunits SPC1, SPC2 and SPC3. The complex induces a local thinning of the ER membrane which is used to measure the length of the signal peptide (SP) h-region of protein substrates. This ensures the selectivity of the complex towards h-regions shorter than 18-20 amino acids. SPC associates with the translocon complex.

Its subcellular location is the endoplasmic reticulum membrane. The catalysed reaction is Cleavage of hydrophobic, N-terminal signal or leader sequences from secreted and periplasmic proteins.. Functionally, catalytic component of the signal peptidase complex (SPC) which catalyzes the cleavage of N-terminal signal sequences from nascent proteins as they are translocated into the lumen of the endoplasmic reticulum. Specifically cleaves N-terminal signal peptides that contain a hydrophobic alpha-helix (h-region) shorter than 18-20 amino acids. This is Signal peptidase complex catalytic subunit SEC11 (SEC11) from Komagataella phaffii (strain GS115 / ATCC 20864) (Yeast).